Reading from the N-terminus, the 782-residue chain is Isoamylase 3, chloroplastic (782 aa).

The transit peptide at 1 to 68 (MDSIGINRAP…EKVRRFDSVR (68 aa)) directs the protein to the chloroplast. A compositionally biased stretch (polar residues) spans 68-81 (RSTTARAQNGNAGR). Positions 68-88 (RSTTARAQNGNAGRSMTEERG) are disordered. Asp445 functions as the Nucleophile in the catalytic mechanism. Glu482 serves as the catalytic Proton donor.

The protein belongs to the glycosyl hydrolase 13 family. In terms of tissue distribution, expressed in leaves. Expressed at low levels in developing endosperm.

Its subcellular location is the plastid. It is found in the chloroplast. The protein localises to the amyloplast. It catalyses the reaction Hydrolysis of (1-&gt;6)-alpha-D-glucosidic branch linkages in glycogen, amylopectin and their beta-limit dextrins.. Its function is as follows. Starch-debranching enzyme that plays a role in the degradation of transitory starch during the night in leaf blades, facilitates the formation of spherical amyloplasts containing compound granules in the endosperm, and affects morphological characteristics of plastids. The polypeptide is Isoamylase 3, chloroplastic (Oryza sativa subsp. japonica (Rice)).